We begin with the raw amino-acid sequence, 300 residues long: 7-methylguanosine phosphate-specific 5'-nucleotidase (300 aa).

Catalysis depends on D41, which acts as the Nucleophile. The Mg(2+) site is built by D41 and D43. The active-site Proton donor is D43. Position 88 (E88) interacts with CMP. E88 lines the N(7)-methyl-GMP pocket. Residues 156-157 and K205 each bind substrate; that span reads SA. D230 contacts Mg(2+). K256 carries the N6-acetyllysine modification.

This sequence belongs to the pyrimidine 5'-nucleotidase family. In terms of assembly, monomer.

The protein resides in the cytoplasm. It carries out the reaction N(7)-methyl-GMP + H2O = N(7)-methylguanosine + phosphate. It catalyses the reaction CMP + H2O = cytidine + phosphate. The catalysed reaction is a ribonucleoside 5'-phosphate + H2O = a ribonucleoside + phosphate. In terms of biological role, specifically hydrolyzes 7-methylguanosine monophosphate (m(7)GMP) to 7-methylguanosine and inorganic phosphate. The specific activity for m(7)GMP may protect cells against undesired salvage of m(7)GMP and its incorporation into nucleic acids. Also has weak activity for CMP. UMP and purine nucleotides are poor substrates. This chain is 7-methylguanosine phosphate-specific 5'-nucleotidase (Nt5c3b), found in Mus musculus (Mouse).